The sequence spans 274 residues: Dermonecrotic toxin SdSicTox-betaIIB1bi (274 aa).

Histidine 5 is an active-site residue. Positions 25 and 27 each coordinate Mg(2+). The active-site Nucleophile is histidine 41. Cystine bridges form between cysteine 45–cysteine 51 and cysteine 47–cysteine 190. Residue aspartate 85 coordinates Mg(2+).

It belongs to the arthropod phospholipase D family. Class II subfamily. Requires Mg(2+) as cofactor. In terms of tissue distribution, expressed by the venom gland.

It is found in the secreted. It catalyses the reaction an N-(acyl)-sphingosylphosphocholine = an N-(acyl)-sphingosyl-1,3-cyclic phosphate + choline. It carries out the reaction an N-(acyl)-sphingosylphosphoethanolamine = an N-(acyl)-sphingosyl-1,3-cyclic phosphate + ethanolamine. The catalysed reaction is a 1-acyl-sn-glycero-3-phosphocholine = a 1-acyl-sn-glycero-2,3-cyclic phosphate + choline. The enzyme catalyses a 1-acyl-sn-glycero-3-phosphoethanolamine = a 1-acyl-sn-glycero-2,3-cyclic phosphate + ethanolamine. In terms of biological role, dermonecrotic toxins cleave the phosphodiester linkage between the phosphate and headgroup of certain phospholipids (sphingolipid and lysolipid substrates), forming an alcohol (often choline) and a cyclic phosphate. This toxin acts on sphingomyelin (SM). It may also act on ceramide phosphoethanolamine (CPE), lysophosphatidylcholine (LPC) and lysophosphatidylethanolamine (LPE), but not on lysophosphatidylserine (LPS), and lysophosphatidylglycerol (LPG). It acts by transphosphatidylation, releasing exclusively cyclic phosphate products as second products. Induces dermonecrosis, hemolysis, increased vascular permeability, edema, inflammatory response, and platelet aggregation. The protein is Dermonecrotic toxin SdSicTox-betaIIB1bi of Sicarius cf. damarensis (strain GJB-2008) (Six-eyed sand spider).